A 137-amino-acid polypeptide reads, in one-letter code: MLQPKRTKFRKQMTGHNRGLAHRGSKVSFGEFALKSVSRGRLTARQIEAARRALTRHVKRGGKIWIRVFPDKPVTKKPLEVRMGKGKGNVEYWVAQIQPGKVLYEIEGVSEELAREAFALAAAKLPLATTFVKRTVM.

This sequence belongs to the universal ribosomal protein uL16 family. Part of the 50S ribosomal subunit.

Functionally, binds 23S rRNA and is also seen to make contacts with the A and possibly P site tRNAs. In Azotobacter vinelandii (strain DJ / ATCC BAA-1303), this protein is Large ribosomal subunit protein uL16.